A 146-amino-acid polypeptide reads, in one-letter code: Large ribosomal subunit protein uL15 (146 aa).

The segment at 1-58 is disordered; that stretch reads MRLHELHPAPGSRPRATRVGRGIGSGLGKTSGRGHKGQKARSGGGVRRGFEGGQMPLT. The span at 21 to 31 shows a compositional bias: gly residues; sequence RGIGSGLGKTS.

The protein belongs to the universal ribosomal protein uL15 family. Part of the 50S ribosomal subunit.

Its function is as follows. Binds to the 23S rRNA. This is Large ribosomal subunit protein uL15 from Moorella thermoacetica (strain ATCC 39073 / JCM 9320).